The chain runs to 363 residues: Biotin synthase (363 aa).

The Radical SAM core domain maps to 40-268; that stretch reads NVVQVSTLLS…ETQVRLSAGR (229 aa). [4Fe-4S] cluster is bound by residues C55, C59, and C62. Residues C99, C131, C191, and R263 each contribute to the [2Fe-2S] cluster site.

It belongs to the radical SAM superfamily. Biotin synthase family. As to quaternary structure, homodimer. It depends on [4Fe-4S] cluster as a cofactor. Requires [2Fe-2S] cluster as cofactor.

It catalyses the reaction (4R,5S)-dethiobiotin + (sulfur carrier)-SH + 2 reduced [2Fe-2S]-[ferredoxin] + 2 S-adenosyl-L-methionine = (sulfur carrier)-H + biotin + 2 5'-deoxyadenosine + 2 L-methionine + 2 oxidized [2Fe-2S]-[ferredoxin]. It participates in cofactor biosynthesis; biotin biosynthesis; biotin from 7,8-diaminononanoate: step 2/2. Functionally, catalyzes the conversion of dethiobiotin (DTB) to biotin by the insertion of a sulfur atom into dethiobiotin via a radical-based mechanism. The polypeptide is Biotin synthase (Flavobacterium johnsoniae (strain ATCC 17061 / DSM 2064 / JCM 8514 / BCRC 14874 / CCUG 350202 / NBRC 14942 / NCIMB 11054 / UW101) (Cytophaga johnsonae)).